The sequence spans 186 residues: MIALFNKLLDWFKALFWKEEMELTLVGLQYSGKTTFVNVIASGQFNEDMIPTVGFNMRKITKGNVTIKLWDIGGQPRFRSMWERYCRGVSAIVYMVDAADQEKIEASKNELHNLLDKPQLQGIPVLVLGNKRDLPGALDEKELIEKMNLSAIQDREICCYSISCKEKDNIDITLQWLIQHSKSRRS.

The segment at residues 1–19 (MIALFNKLLDWFKALFWKE) is an intramembrane region (note=Mediates targeting to membranes). GTP is bound by residues 29–35 (QYSGKTT), 71–75 (DIGGQ), and 130–133 (NKRD).

This sequence belongs to the small GTPase superfamily. Arf family. As to quaternary structure, interacts with PLEKHM1. When GTP-bound, interacts with RUFY3 and RUFY4, but not with RUFY1, nor RUFY2. As to expression, ubiquitously expressed.

The protein localises to the late endosome membrane. It is found in the lysosome membrane. Its subcellular location is the cytoplasm. It localises to the cytoskeleton. The protein resides in the spindle. The protein localises to the cell projection. It is found in the axon. Its subcellular location is the synapse. In terms of biological role, plays a role in lysosome motility. In neurons, mediates the anterograde axonal long-range transport of presynaptic lysosome-related vesicles required for presynaptic biogenesis and synaptic function. May play a role in chromosome segregation. The polypeptide is ADP-ribosylation factor-like protein 8A (ARL8A) (Homo sapiens (Human)).